Here is a 729-residue protein sequence, read N- to C-terminus: Sodium-dependent neutral amino acid transporter B(0)AT2 (729 aa).

Topologically, residues 1–69 (MPKNSKVVKR…ERPAWNSKLQ (69 aa)) are cytoplasmic. A phosphoserine mark is found at Ser25 and Ser55. Helical transmembrane passes span 70 to 90 (YILA…FPYL), 98 to 117 (AYLL…LFFL), and 142 to 162 (GIGF…NVII). Over 163-225 (GWTLFYFSQS…SSISESGGLN (63 aa)) the chain is Extracellular. N-linked (GlcNAc...) asparagine glycosylation occurs at Asn187. 4 helical membrane-spanning segments follow: residues 226–244 (WKMT…LAMI), 253–270 (IMYF…CFLI), 306–323 (VFFA…FSSY), and 335–356 (VLVS…FAVL). The Extracellular portion of the chain corresponds to 357–452 (GFKANIVNEK…FIAFTEAMTH (96 aa)). N-linked (GlcNAc...) asparagine glycosylation is found at Asn383 and Asn394. Transmembrane regions (helical) follow at residues 453–472 (FPAS…NLGL), 496–514 (ILTV…MFVQ), 530–550 (TLPL…VYGI), 571–592 (YMWK…IVNM), and 620–642 (VVCF…IRRC). Over 643-729 (NLIDDSSGNL…DMPDMPESDL (87 aa)) the chain is Cytoplasmic. Ser687, Ser699, and Ser701 each carry phosphoserine.

The protein belongs to the sodium:neurotransmitter symporter (SNF) (TC 2.A.22) family. SLC6A15 subfamily. Widely distributed in the central nervous system, including the olfactory bulb, the hypothalamus, the cerebral cortex, the hippocampus, and the cerebellum. In addition, intense expression is found in the motor nuclei including the oculomotor nucleus, abducens nucleus, trigeminal motor nucleus, facial nucleus, hypoglossal nucleus and ventral horn of spinal cord. Intense hybridization signals are also observed in the nuclei containing monoaminergic neurons, such as locus coeruleus, the substantia nigra pars compacta, the ventral tegmental area, the dorsal raphe nucleus and the median raphe nucleus.

The protein resides in the membrane. It carries out the reaction L-leucine(in) + Na(+)(in) = L-leucine(out) + Na(+)(out). The enzyme catalyses L-isoleucine(in) + Na(+)(in) = L-isoleucine(out) + Na(+)(out). The catalysed reaction is L-methionine(in) + Na(+)(in) = L-methionine(out) + Na(+)(out). It catalyses the reaction L-proline(in) + Na(+)(in) = L-proline(out) + Na(+)(out). It carries out the reaction L-alanine(in) + Na(+)(in) = L-alanine(out) + Na(+)(out). The enzyme catalyses L-asparagine(in) + Na(+)(in) = L-asparagine(out) + Na(+)(out). The catalysed reaction is L-valine(in) + Na(+)(in) = L-valine(out) + Na(+)(out). It catalyses the reaction L-cysteine(in) + Na(+)(in) = L-cysteine(out) + Na(+)(out). It carries out the reaction L-glutamine(in) + Na(+)(in) = L-glutamine(out) + Na(+)(out). The enzyme catalyses L-serine(in) + Na(+)(in) = L-serine(out) + Na(+)(out). The catalysed reaction is L-threonine(in) + Na(+)(in) = L-threonine(out) + Na(+)(out). It catalyses the reaction L-pipecolate(in) + Na(+)(in) = L-pipecolate(out) + Na(+)(out). It carries out the reaction L-phenylalanine(in) + Na(+)(in) = L-phenylalanine(out) + Na(+)(out). In terms of biological role, functions as a sodium-dependent neutral amino acid transporter. Exhibits preference for the branched-chain amino acids, particularly leucine, valine and isoleucine and methionine. Can also transport low-affinity substrates such as alanine, phenylalanine, glutamine and pipecolic acid. Mediates the saturable, pH-sensitive and electrogenic cotransport of proline and sodium ions with a stoichiometry of 1:1. May have a role as transporter for neurotransmitter precursors into neurons. In contrast to other members of the neurotransmitter transporter family, does not appear to be chloride-dependent. The sequence is that of Sodium-dependent neutral amino acid transporter B(0)AT2 (Slc6a15) from Rattus norvegicus (Rat).